The following is a 607-amino-acid chain: Polyphenol oxidase, chloroplastic (607 aa).

The N-terminal 103 residues, 1-103 (MASLPWSLTT…LGATKPLAFG (103 aa)), are a transit peptide targeting the chloroplast. A disordered region spans residues 39-73 (RNRSRRFAPSKVSCNSANGDPNSDSTSDVRETSSG). Residues 50–64 (VSCNSANGDPNSDST) are compositionally biased toward polar residues. Intrachain disulfides connect Cys114–Cys129 and Cys128–Cys191. Residues His190, His211, His220, His342, His346, and His375 each contribute to the Cu cation site. Positions 194–211 (CQGAYDQVGYTDLELQVH) form a cross-link, 2'-(S-cysteinyl)-histidine (Cys-His).

This sequence belongs to the tyrosinase family. Requires Cu(2+) as cofactor.

It is found in the plastid. The protein localises to the chloroplast thylakoid lumen. The enzyme catalyses 2 catechol + O2 = 2 1,2-benzoquinone + 2 H2O. In terms of biological role, catalyzes the oxidation of mono- and o-diphenols to o-diquinones. This chain is Polyphenol oxidase, chloroplastic, found in Vitis vinifera (Grape).